Here is a 470-residue protein sequence, read N- to C-terminus: Ubiquitin carboxyl-terminal hydrolase calypso (470 aa).

A UCH catalytic domain is found at 43–274; that stretch reads GWLELESDPG…IRFNLMAVVP (232 aa). Cys-129 (nucleophile) is an active-site residue. The active-site Proton donor is the His-211. The tract at residues 305–324 is disordered; it reads DEQGEGGNGDPQRPDTPSTL. Residues 373–401 enclose the ULD domain; the sequence is NYDKFICTFLSMLAHQGVLGELVSQHLLP. The tract at residues 403–470 is positively charged C-terminal tail required for binding nucleosomes; that stretch reads KKISGQSAAN…KGRNKCKKRK (68 aa). Low complexity predominate over residues 422-451; the sequence is ANAGATAAGAAGAAPKSQQQQAAAAKNGKS. Residues 422–470 form a disordered region; the sequence is ANAGATAAGAAGAAPKSQQQQAAAAKNGKSPSKTPGRRRKGRNKCKKRK. Residues 456–470 are compositionally biased toward basic residues; it reads PGRRRKGRNKCKKRK.

It belongs to the peptidase C12 family. BAP1 subfamily. In terms of assembly, catalytic component of the polycomb repressive deubiquitinase (PR-DUB) complex, at least composed of caly/calypso, Asx and sba (MBD5/6 homolog). The PR-DUB complex associates with nucleosomes to mediate deubiquitination of histone H2AK118ub1 substrates; the association requires the positively charged C-terminal tail of caly, probably due to direct binding of DNA. Interacts (via ULD domain) with Asx (via DEUBAD domain); the interaction produces a stable heterodimer with a composite binding site for ubiquitin. Homodimerizes (via coiled-coil hinge-region between the UCH and ULD domains) to mediate assembly of 2 copies of the caly-Asx heterodimer into a bisymmetric tetramer; dimerization enhances PR-DUB association with nucleosomes.

The protein localises to the nucleus. It catalyses the reaction Thiol-dependent hydrolysis of ester, thioester, amide, peptide and isopeptide bonds formed by the C-terminal Gly of ubiquitin (a 76-residue protein attached to proteins as an intracellular targeting signal).. In terms of biological role, catalytic component of the polycomb repressive deubiquitinase (PR-DUB) complex, a complex that specifically mediates deubiquitination of histone H2A monoubiquitinated at 'Lys-119' (H2AK118ub1). Mediates bisymmetric organization of the PR-DUB complex and is involved in association with nucleosomes to mediate deubiquitination. Does not deubiquitinate monoubiquitinated histone H2B. Required to maintain the transcriptionally repressive state of homeotic genes throughout development. The PR-DUB complex has weak or no activity toward 'Lys-48'- and 'Lys-63'-linked polyubiquitin chains. Polycomb group (PcG) protein. The polypeptide is Ubiquitin carboxyl-terminal hydrolase calypso (Drosophila ananassae (Fruit fly)).